A 309-amino-acid polypeptide reads, in one-letter code: Serine/threonine-protein phosphatase PP2A catalytic subunit (309 aa).

Mn(2+)-binding residues include Asp-57, His-59, Asp-85, and Asn-117. His-118 serves as the catalytic Proton donor. Residues His-167 and His-241 each contribute to the Mn(2+) site.

The protein belongs to the PPP phosphatase family. PP-2A subfamily. It depends on Mn(2+) as a cofactor.

The catalysed reaction is O-phospho-L-seryl-[protein] + H2O = L-seryl-[protein] + phosphate. The enzyme catalyses O-phospho-L-threonyl-[protein] + H2O = L-threonyl-[protein] + phosphate. In Brassica napus (Rape), this protein is Serine/threonine-protein phosphatase PP2A catalytic subunit.